A 499-amino-acid polypeptide reads, in one-letter code: Maturase K (499 aa).

The protein belongs to the intron maturase 2 family. MatK subfamily.

It localises to the plastid. The protein resides in the chloroplast. Its function is as follows. Usually encoded in the trnK tRNA gene intron. Probably assists in splicing its own and other chloroplast group II introns. The polypeptide is Maturase K (Batis maritima (Maritime saltwort)).